A 420-amino-acid polypeptide reads, in one-letter code: D-tagatose-1,6-bisphosphate aldolase subunit GatZ (420 aa).

This sequence belongs to the GatZ/KbaZ family. GatZ subfamily. Forms a complex with GatY.

Its pathway is carbohydrate metabolism; D-tagatose 6-phosphate degradation; D-glyceraldehyde 3-phosphate and glycerone phosphate from D-tagatose 6-phosphate: step 2/2. Its function is as follows. Component of the tagatose-1,6-bisphosphate aldolase GatYZ that is required for full activity and stability of the Y subunit. Could have a chaperone-like function for the proper and stable folding of GatY. When expressed alone, GatZ does not show any aldolase activity. Is involved in the catabolism of galactitol. The chain is D-tagatose-1,6-bisphosphate aldolase subunit GatZ from Escherichia coli O6:H1 (strain CFT073 / ATCC 700928 / UPEC).